A 176-amino-acid polypeptide reads, in one-letter code: Calcium and integrin-binding family member 2 (176 aa).

EF-hand domains follow at residues 55–90 (RENPFKERIVEAFSEDGEGNLTFNDFVDMFSVLCES), 92–127 (PRDLKASYAFKIYDFNTDNFICKEDLQLTLARLTKS), and 133–168 (EVVLVCDKVIEEADLDGDGKLGFADFEDMIAKAPDF). Ca(2+) is bound by residues aspartate 105, asparagine 107, aspartate 109, aspartate 116, aspartate 146, aspartate 148, aspartate 150, lysine 152, and aspartate 157.

As to quaternary structure, monomer. Homodimer. Interacts with WHRN and MYO7A. Interacts with ITGA2B (via C-terminus cytoplasmic tail region); the interactions are stabilized/increased in a calcium and magnesium-dependent manner. Interacts with ITGA7 (via C-terminus cytoplasmic tail region); the interactions are stabilized/increased in a calcium and magnesium-dependent manner. Interacts with TMC1. Interacts with TMC2. In terms of tissue distribution, expressed in liver, heart, kidney, brain, spleen, stomach, ovary, testis and muscle.

It localises to the cytoplasm. The protein resides in the cell projection. It is found in the stereocilium. Its subcellular location is the photoreceptor inner segment. The protein localises to the cilium. It localises to the photoreceptor outer segment. The protein resides in the cell membrane. It is found in the sarcolemma. Calcium- and integrin-binding protein that plays a role in intracellular calcium homeostasis. Acts as an auxiliary subunit of the sensory mechanoelectrical transduction (MET) channel in hair cells. Essential for mechanoelectrical transduction (MET) currents in auditory hair cells and thereby required for hearing. Regulates the function of hair cell mechanotransduction by controlling the distribution of transmembrane channel-like proteins TMC1 and TMC2, and by regulating the function of the MET channels in hair cells. Required for the maintenance of auditory hair cell stereocilia bundle morphology and function and for hair-cell survival in the cochlea. Critical for proper photoreceptor cell maintenance and function. Plays a role in intracellular calcium homeostasis by decreasing ATP-induced calcium release. This is Calcium and integrin-binding family member 2 (CIB2) from Ovis aries (Sheep).